We begin with the raw amino-acid sequence, 421 residues long: UDP-N-acetylglucosamine 1-carboxyvinyltransferase (421 aa).

22-23 (KN) provides a ligand contact to phosphoenolpyruvate. Residue arginine 93 participates in UDP-N-acetyl-alpha-D-glucosamine binding. Cysteine 117 serves as the catalytic Proton donor. Cysteine 117 carries the post-translational modification 2-(S-cysteinyl)pyruvic acid O-phosphothioketal. UDP-N-acetyl-alpha-D-glucosamine is bound by residues 122 to 126 (RPVDL), aspartate 308, and isoleucine 330.

This sequence belongs to the EPSP synthase family. MurA subfamily.

It localises to the cytoplasm. It catalyses the reaction phosphoenolpyruvate + UDP-N-acetyl-alpha-D-glucosamine = UDP-N-acetyl-3-O-(1-carboxyvinyl)-alpha-D-glucosamine + phosphate. It participates in cell wall biogenesis; peptidoglycan biosynthesis. Functionally, cell wall formation. Adds enolpyruvyl to UDP-N-acetylglucosamine. This is UDP-N-acetylglucosamine 1-carboxyvinyltransferase from Pseudomonas fluorescens (strain ATCC BAA-477 / NRRL B-23932 / Pf-5).